Consider the following 664-residue polypeptide: Glycine--tRNA ligase beta subunit (664 aa).

This sequence belongs to the class-II aminoacyl-tRNA synthetase family. Tetramer of two alpha and two beta subunits.

The protein localises to the cytoplasm. The catalysed reaction is tRNA(Gly) + glycine + ATP = glycyl-tRNA(Gly) + AMP + diphosphate. This is Glycine--tRNA ligase beta subunit from Rickettsia peacockii (strain Rustic).